The primary structure comprises 170 residues: UPF0316 protein CLJ_B0679 (170 aa).

Transmembrane regions (helical) follow at residues 1–21 and 36–56; these read MLSY…LMTI and IIGF…LSGI.

It belongs to the UPF0316 family.

It is found in the cell membrane. This Clostridium botulinum (strain 657 / Type Ba4) protein is UPF0316 protein CLJ_B0679.